The chain runs to 258 residues: MTYLSRILEEKRQAVLALKQQRPLQHYLEQETELSPCRDFQGCLKRSVDRIKLIAEIKKASPSRGLIVSDFKPLEMARRYMDLGASAFSVLTEEVFFQGSPDYLKEVRRAFSLPVLRKDFILDECQIFESRLMGADAILLIVAALDPHQLQDYLDLARQTGLHVLVEVHDHRELDIALNAGSMIIGINNRDLRDFSVNLHTSIKLRPYIPEGIVSVSESGVKTAADAALLDNASFDAVLIGEGLHVSEDLKRVIWTET.

This sequence belongs to the TrpC family.

The enzyme catalyses 1-(2-carboxyphenylamino)-1-deoxy-D-ribulose 5-phosphate + H(+) = (1S,2R)-1-C-(indol-3-yl)glycerol 3-phosphate + CO2 + H2O. It functions in the pathway amino-acid biosynthesis; L-tryptophan biosynthesis; L-tryptophan from chorismate: step 4/5. In Chlorobium phaeobacteroides (strain DSM 266 / SMG 266 / 2430), this protein is Indole-3-glycerol phosphate synthase.